We begin with the raw amino-acid sequence, 720 residues long: Replication restart protein PriA (720 aa).

Positions 200-366 constitute a Helicase ATP-binding domain; it reads ILMKNCFTSW…LHKKCFYIKF (167 aa). 213-220 serves as a coordination point for ATP; it reads KNNFYLKV. The short motif at 309 to 312 is the DEAH box element; that stretch reads NQEH. Positions 425, 428, 434, 437, 452, 455, 465, and 468 each coordinate Zn(2+).

This sequence belongs to the helicase family. PriA subfamily. Component of the replication restart primosome. Zn(2+) serves as cofactor.

The enzyme catalyses Couples ATP hydrolysis with the unwinding of duplex DNA by translocating in the 3'-5' direction.. It carries out the reaction ATP + H2O = ADP + phosphate + H(+). Initiates the restart of stalled replication forks, which reloads the replicative helicase on sites other than the origin of replication. Recognizes and binds to abandoned replication forks and remodels them to uncover a helicase loading site. Promotes assembly of the primosome at these replication forks. This Buchnera aphidicola subsp. Schizaphis graminum (strain Sg) protein is Replication restart protein PriA.